The chain runs to 247 residues: ATP synthase subunit a, chloroplastic (247 aa).

A run of 5 helical transmembrane segments spans residues 38 to 58 (QVLI…ILVV), 95 to 115 (VPFI…GALL), 134 to 154 (INTT…AGIS), 199 to 219 (LVVV…VMFL), and 220 to 240 (GLFT…AYIG).

Belongs to the ATPase A chain family. As to quaternary structure, F-type ATPases have 2 components, CF(1) - the catalytic core - and CF(0) - the membrane proton channel. CF(1) has five subunits: alpha(3), beta(3), gamma(1), delta(1), epsilon(1). CF(0) has four main subunits: a, b, b' and c.

The protein resides in the plastid. It localises to the chloroplast thylakoid membrane. Its function is as follows. Key component of the proton channel; it plays a direct role in the translocation of protons across the membrane. This Lotus japonicus (Lotus corniculatus var. japonicus) protein is ATP synthase subunit a, chloroplastic.